A 315-amino-acid polypeptide reads, in one-letter code: Glutamyl-Q tRNA(Asp) synthetase (315 aa).

Residues 12 to 16 (RFAPS) and glutamate 48 contribute to the L-glutamate site. Residues 15 to 25 (PSPSGPLHFGS) carry the 'HIGH' region motif. Residues cysteine 104, cysteine 106, tyrosine 124, and cysteine 128 each contribute to the Zn(2+) site. The L-glutamate site is built by tyrosine 181 and arginine 199. Residues 237-241 (KLSKQ) carry the 'KMSKS' region motif. An ATP-binding site is contributed by lysine 240.

Belongs to the class-I aminoacyl-tRNA synthetase family. GluQ subfamily. Zn(2+) serves as cofactor.

Catalyzes the tRNA-independent activation of glutamate in presence of ATP and the subsequent transfer of glutamate onto a tRNA(Asp). Glutamate is transferred on the 2-amino-5-(4,5-dihydroxy-2-cyclopenten-1-yl) moiety of the queuosine in the wobble position of the QUC anticodon. This Aromatoleum aromaticum (strain DSM 19018 / LMG 30748 / EbN1) (Azoarcus sp. (strain EbN1)) protein is Glutamyl-Q tRNA(Asp) synthetase.